The sequence spans 661 residues: MTQAQAKRFQFDRQLWHRFVETAQPYFYPVGQKQTRVFLGLILALMVVVVALTLFLSMGLTLWATAIFPDFFAKSGEGLVDGVQGLINSPAPWIGLVALAMAGAVFISQRQKLQQRWLQWLLLGVLLSLLFVVNGLNVILSFVFRFIDTALNGKDAEVFWQFLWIYGIVIVVAIPIIVAYRYLRQKLGVLWRQWLTEHFLGRYFKGRSYYHLDSNSAYTLIDNPDQRITQDIQSFTGVTLDFLLDILDSILTLISFTAILYTISQTLMWGLIGYAVFGTVVAIAIGTRLIRINYEQLRLEANFRYGLVRVRDNAESIAFYRGEGLERKQVTDRLLGAIRNFNLLIIWQALISLFQLGYNYFTRLIPYIIIAPLYLAGDLDFGAIAQASLAFGMVLSALSLVTNQIQNITEFAASINRLGEFYESLNGPSNELERPESTGFDHNVITTRIGATVALENVTLSPPNSSRILVRDLSLAVAPGNHLLIMGPSGSGKSSLLRAIAGLWDSGQGTIERPELADLLFLPQRPYMILGTLREQLIYPSAQSIADDDFLLETLNKVNLPDLAERFGGLDSLENWSSVLSLGEQQRIALARVFINQPRYAILDEATSALDVNNEAELYHALTDLGTTFISVGHRPTLRNFHRQCLEVQAEGRWQISPINN.

A run of 7 helical transmembrane segments spans residues 37 to 57, 87 to 107, 120 to 140, 158 to 178, 243 to 263, 266 to 286, and 341 to 361; these read VFLG…LFLS, INSP…AVFI, WLLL…NVIL, VFWQ…PIIV, LLDI…LYTI, TLMW…IAIG, and FNLL…YNYF. The ABC transmembrane type-1 domain maps to 123 to 410; sequence LGVLLSLLFV…VTNQIQNITE (288 aa). An ABC transporter domain is found at 453–659; it reads VALENVTLSP…AEGRWQISPI (207 aa). 487–494 contacts ATP; sequence GPSGSGKS.

This sequence belongs to the ABC transporter superfamily.

It localises to the cell inner membrane. This is an uncharacterized protein from Synechocystis sp. (strain ATCC 27184 / PCC 6803 / Kazusa).